Here is a 424-residue protein sequence, read N- to C-terminus: Type II methyltransferase M.BspRI (424 aa).

Positions 58 to 408 (FNVLSLFCGA…KSIAQFAADY (351 aa)) constitute an SAM-dependent MTase C5-type domain. Cys-156 (S-methylcysteine intermediate) is an active-site residue. Cys-181 carries the post-translational modification S-methylcysteine; by autocatalysis.

Belongs to the class I-like SAM-binding methyltransferase superfamily. C5-methyltransferase family. As to quaternary structure, monomer. In the absence of DNA, can self-methylate two cysteine residues.

It carries out the reaction a 2'-deoxycytidine in DNA + S-adenosyl-L-methionine = a 5-methyl-2'-deoxycytidine in DNA + S-adenosyl-L-homocysteine + H(+). Functionally, a methylase, recognizes the double-stranded sequence 5'-GGCC-3', methylates C-3 on both strands, and protects the DNA from cleavage by the BspRI endonuclease. This chain is Type II methyltransferase M.BspRI (bspRIM), found in Lysinibacillus sphaericus (Bacillus sphaericus).